The following is a 501-amino-acid chain: MPFSADSVTSLRQLADALAARSVSAEELARTYLARIEQAGALNAFTHVDAERTLAQAREADARRARGEATLLTGVPVAHKDVFVTRGWRATAGSKMLANYESPFDATVVERMAAAGMVTLGKTNMDEFAMGSSNENSFFGAVRNPWDTDRVPGGSSGGSAAAVAAGLAPAATGTDTGGSIRQPSSFSGITGIKPTYGRVSRYGMIAFASSLDQGGPMAHTAEDCALLLNAMAGFDAKDSTSIPPEQGGVDEDFARYLGQPRAGASESQPLAGLRIGLPREYFGKGLSPDVEETVRAALRQYEQLGATLVEVSLPKTELSIPVYYVIAPAEASSNLSRFDGVRYGHRAAEYRDLLDMYKKSRAEGFGAEVKRRIMVGTYVLSHGYYDAYYLQAQKIRRIIADDFQRAFAQCDVIMGPVAPTVAWKLGEKTSDPVQMYLADIFTLSTSLAGLPGMSVPCGFGDGNMPVGLQLIGNYFDEARLLQTAHAFQQATDWHLRRPAKA.

Active-site charge relay system residues include K80 and S155. The active-site Acyl-ester intermediate is the S179.

Belongs to the amidase family. GatA subfamily. As to quaternary structure, heterotrimer of A, B and C subunits.

The enzyme catalyses L-glutamyl-tRNA(Gln) + L-glutamine + ATP + H2O = L-glutaminyl-tRNA(Gln) + L-glutamate + ADP + phosphate + H(+). In terms of biological role, allows the formation of correctly charged Gln-tRNA(Gln) through the transamidation of misacylated Glu-tRNA(Gln) in organisms which lack glutaminyl-tRNA synthetase. The reaction takes place in the presence of glutamine and ATP through an activated gamma-phospho-Glu-tRNA(Gln). This Cupriavidus pinatubonensis (strain JMP 134 / LMG 1197) (Cupriavidus necator (strain JMP 134)) protein is Glutamyl-tRNA(Gln) amidotransferase subunit A.